The following is a 488-amino-acid chain: 3-octaprenyl-4-hydroxybenzoate carboxy-lyase (488 aa).

Mn(2+) is bound at residue Asn172. Prenylated FMN contacts are provided by residues 175–177 (IYR), 189–191 (RWL), and 194–195 (RG). Glu238 contacts Mn(2+). The active-site Proton donor is Asp287.

It belongs to the UbiD family. Homohexamer. It depends on prenylated FMN as a cofactor. The cofactor is Mn(2+).

It localises to the cell membrane. The enzyme catalyses a 4-hydroxy-3-(all-trans-polyprenyl)benzoate + H(+) = a 2-(all-trans-polyprenyl)phenol + CO2. Its pathway is cofactor biosynthesis; ubiquinone biosynthesis. Catalyzes the decarboxylation of 3-octaprenyl-4-hydroxy benzoate to 2-octaprenylphenol, an intermediate step in ubiquinone biosynthesis. The protein is 3-octaprenyl-4-hydroxybenzoate carboxy-lyase of Legionella pneumophila (strain Lens).